Reading from the N-terminus, the 600-residue chain is Elongation factor 4 (600 aa).

Positions 5 to 187 constitute a tr-type G domain; sequence KYIRNFSIIA…AIVNKLPPPK (183 aa). Residues 17–22 and 134–137 contribute to the GTP site; these read DHGKST and NKLD.

It belongs to the TRAFAC class translation factor GTPase superfamily. Classic translation factor GTPase family. LepA subfamily.

Its subcellular location is the cell inner membrane. The enzyme catalyses GTP + H2O = GDP + phosphate + H(+). Its function is as follows. Required for accurate and efficient protein synthesis under certain stress conditions. May act as a fidelity factor of the translation reaction, by catalyzing a one-codon backward translocation of tRNAs on improperly translocated ribosomes. Back-translocation proceeds from a post-translocation (POST) complex to a pre-translocation (PRE) complex, thus giving elongation factor G a second chance to translocate the tRNAs correctly. Binds to ribosomes in a GTP-dependent manner. This chain is Elongation factor 4, found in Rickettsia conorii (strain ATCC VR-613 / Malish 7).